The following is a 7354-amino-acid chain: Microtubule-actin cross-linking factor 1, isoforms 1/2/3/4 (7354 aa).

The disordered stretch occupies residues 1–47 (MSSSDEETLSERSCRSERSCRSERSYRSERSGSLSPCPPGDTLPWNL). Residues 1 to 295 (MSSSDEETLS…VITYVSSIYD (295 aa)) are actin-binding. Ser-4 is modified (phosphoserine). Residues 9–30 (LSERSCRSERSCRSERSYRSER) are compositionally biased toward basic and acidic residues. A Phosphoserine modification is found at Ser-35. Position 42 is a phosphothreonine (Thr-42). Ser-57 carries the phosphoserine modification. Calponin-homology (CH) domains follow at residues 78-181 (RVQK…LHFQ) and 194-298 (MSAK…DAFP). Residues 148–171 (QRQVKLVNIRNDDITDGNPKLTLG) form an LRR 1 repeat. The residue at position 280 (Ser-280) is a Phosphoserine. LRR repeat units follow at residues 377 to 399 (LYKL…YHPN) and 441 to 464 (LNCE…LESG). The region spanning 868-925 (KSTLSVKAICDYRQIEITICKNDECVLEDNSQRTKWKVISPTGNEAMVPSVCFLIPPP) is the SH3 domain. One copy of the LRR 5 repeat lies at 1050–1073 (ISELKNIRLLLEECEQRLLKQIQS). A Phosphoserine modification is found at Ser-1122. 3 LRR repeats span residues 1128–1154 (ATTL…VYLN), 1187–1210 (PADL…VKDK), and 1257–1282 (HRVI…DYRA). Phosphoserine is present on residues Ser-1367 and Ser-1376. 5 Plectin repeats span residues 1577–1619 (LVLL…QLLG), 1654–1696 (LKVL…ELQS), 1769–1809 (RLLE…CAIL), 1811–1848 (RQLQ…VILE), and 1855–1885 (GLLL…HKIL). A phosphoserine mark is found at Ser-2051, Ser-2077, and Ser-2081. Basic and acidic residues-rich tracts occupy residues 2120–2131 (KEEQAETLREEN) and 2145–2155 (SEGKDLSTEKS). The tract at residues 2120 to 2155 (KEEQAETLREENISGDPLLVECPEESEGKDLSTEKS) is disordered. Plectin repeat units follow at residues 2276-2316 (STLS…VKLM), 2352-2393 (NVLM…RILE), 2394-2425 (GQVI…DTAD), 2487-2528 (LLTK…LRKV), and 2671-2715 (LKVL…ASHQ). 3 disordered regions span residues 2806–2841 (AGIR…DSKV), 2951–2978 (EMGG…EVTI), and 3058–3099 (SQET…HISK). A compositionally biased stretch (basic and acidic residues) spans 2812–2837 (NGEKAEKGRKISVEMEGQRQDEKASS). Residues 2968 to 2978 (SEEESDQEVTI) are compositionally biased toward acidic residues. Ser-3082 and Ser-3085 each carry phosphoserine. 3 LRR repeats span residues 3225–3244 (VGQR…LPTR), 3606–3630 (SGKS…IQSH), and 3657–3681 (LTAL…TRVA). Spectrin repeat units follow at residues 3845–3920 (ELQK…NFEE) and 3962–4070 (QYQQ…ALLQ). Ser-3889 is modified (phosphoserine). The LRR 12 repeat unit spans residues 3898–3920 (KGDLRFVTISGQKVLETENNFEE). LRR repeat units lie at residues 4087-4112 (LQSI…VIQE) and 4223-4249 (IQEL…TLGS). A Spectrin 3 repeat occupies 4428–4536 (RMEEVQKEAS…TVARQKQLEE (109 aa)). Residues Ser-4458 and Ser-4483 each carry the phosphoserine modification. LRR repeat units lie at residues 4473–4496 (KAFL…LAGL), 4563–4583 (GVLG…QFML), and 4728–4751 (KKRL…RMNR). The Spectrin 4 repeat unit spans residues 4759–4863 (TQQFQQMFDE…KTANRQSRLK (105 aa)). A Phosphoserine modification is found at Ser-4921. 3 LRR repeats span residues 5010–5035 (NKNL…YLRN), 5131–5153 (NKIQ…MLEE), and 5240–5263 (KDQV…LIQS). 13 Spectrin repeats span residues 5195–5300 (EDFY…QLQE), 5307–5409 (KFQD…QLED), 5414–5506 (AKQF…ADIT), 5631–5735 (RSQQ…ARLE), 5742–5844 (NQFW…ALDE), 5961–6066 (LAEK…KLED), 6071–6175 (AVQY…HKLE), 6181–6284 (LGQF…QQLQ), 6289–6395 (QAQG…KLEE), 6400–6503 (ATEF…RSLD), 6508–6614 (RAKQ…KLEE), 6621–6722 (QFMD…RLEQ), and 6726–6830 (QAEE…QRLE). Thr-5394 is subject to Phosphothreonine. LRR repeat units lie at residues 5654-5678 (MALG…AFSI) and 5763-5787 (AQLP…QLRE). Ser-5988 is modified (phosphoserine). Lys-6166 bears the N6-acetyllysine mark. The LRR 23 repeat unit spans residues 6452-6475 (RDQIIELDQTGNQLKFLSQKQDVV). A disordered region spans residues 6904 to 6937 (SVEPTHAPFMEKSRSGSRKSLNQPTPPPMPILSQ). Ser-6923 bears the Phosphoserine mark. EF-hand domains follow at residues 7001 to 7036 (HKKS…SKFP) and 7037 to 7072 (TTKL…NKDA). 10 residues coordinate Ca(2+): Asp-7014, Asp-7016, Asp-7018, Lys-7020, Glu-7025, Asp-7050, Asp-7052, Asp-7054, Tyr-7056, and Glu-7061. Residues 7077 to 7155 (TDADKIEDEV…EFLVKNDPCR (79 aa)) enclose the GAR domain. The segment at 7077–7354 (TDADKIEDEV…ASPRTPGPKR (278 aa)) is C-terminal tail. Positions 7171 to 7354 (PEGASQGMTP…ASPRTPGPKR (184 aa)) are disordered. Positions 7191 to 7225 (SSRAASPTRSSSSASQSNHSCTSMPSSPATPASGT) are enriched in low complexity. Thr-7220 carries the phosphothreonine modification. Residues 7242 to 7261 (FHSSRTSLAGDTSNSSSPAS) show a composition bias toward polar residues. A phosphoserine mark is found at Ser-7245 and Ser-7258. Positions 7276–7290 (SRPGSRAGSRAGSRA) are enriched in low complexity. The interval 7279-7294 (GSRAGSRAGSRASSRR) is 4 X 4 AA tandem repeats of [GS]-S-R-[AR]. Phosphoserine occurs at positions 7296 and 7299. A compositionally biased stretch (polar residues) spans 7305 to 7315 (ETQSACSDTSE). Low complexity predominate over residues 7316 to 7327 (SSAAGGQGSSRR).

This sequence belongs to the plakin or cytolinker family. As to quaternary structure, interacts with AXIN1, LRP6 and GOLGA4. Found in a complex composed of MACF1, APC, AXIN1, CTNNB1 and GSK3B. Interacts with MAPRE1, CLASP1 and CLASP2. Interacts with CAMSAP3. In terms of processing, phosphorylated on serine residues in the C-terminal tail by GSK3B. Phosphorylation inhibits microtubule-binding and this plays a critical role in bulge stem cell migration and skin wound repair. Wnt-signaling can repress phosphorylation. Enriched in the hair follicle stem cells (at protein level). Isoform 1 and isoform 2 are ubiquitous expressed, with higher levels seen in lung, heart, thymus, spleen and brain.

The protein localises to the cytoplasm. It localises to the cytoskeleton. The protein resides in the golgi apparatus. Its subcellular location is the cell membrane. It is found in the cell projection. The protein localises to the ruffle membrane. Its function is as follows. F-actin-binding protein which plays a role in cross-linking actin to other cytoskeletal proteins and also binds to microtubules. Plays an important role in ERBB2-dependent stabilization of microtubules at the cell cortex. Acts as a positive regulator of Wnt receptor signaling pathway and is involved in the translocation of AXIN1 and its associated complex (composed of APC, CTNNB1 and GSK3B) from the cytoplasm to the cell membrane. Has actin-regulated ATPase activity and is essential for controlling focal adhesions (FAs) assembly and dynamics. Interaction with CAMSAP3 at the minus ends of non-centrosomal microtubules tethers microtubules minus-ends to actin filaments, regulating focal adhesion size and cell migration. May play role in delivery of transport vesicles containing GPI-linked proteins from the trans-Golgi network through its interaction with GOLGA4. Plays a key role in wound healing and epidermal cell migration. Required for efficient upward migration of bulge cells in response to wounding and this function is primarily rooted in its ability to coordinate microtubule dynamics and polarize hair follicle stem cells. As a regulator of actin and microtubule arrangement and stabilization, it plays an essential role in neurite outgrowth, branching and spine formation during brain development. The sequence is that of Microtubule-actin cross-linking factor 1, isoforms 1/2/3/4 from Mus musculus (Mouse).